Reading from the N-terminus, the 110-residue chain is Large ribosomal subunit protein uL22 (110 aa).

The protein belongs to the universal ribosomal protein uL22 family. In terms of assembly, part of the 50S ribosomal subunit.

Its function is as follows. This protein binds specifically to 23S rRNA; its binding is stimulated by other ribosomal proteins, e.g. L4, L17, and L20. It is important during the early stages of 50S assembly. It makes multiple contacts with different domains of the 23S rRNA in the assembled 50S subunit and ribosome. Functionally, the globular domain of the protein is located near the polypeptide exit tunnel on the outside of the subunit, while an extended beta-hairpin is found that lines the wall of the exit tunnel in the center of the 70S ribosome. This Syntrophotalea carbinolica (strain DSM 2380 / NBRC 103641 / GraBd1) (Pelobacter carbinolicus) protein is Large ribosomal subunit protein uL22.